Consider the following 513-residue polypeptide: Cyclin-dependent kinase C-2 (513 aa).

The 300-residue stretch at Phe-26–Phe-325 folds into the Protein kinase domain. ATP-binding positions include Ile-32–Val-40 and Lys-55. Phosphotyrosine is present on Tyr-37. Catalysis depends on Asp-164, which acts as the Proton acceptor. A Phosphothreonine modification is found at Thr-198. The tract at residues Leu-337–Pro-513 is disordered. Positions Ala-395 to Asn-404 are enriched in low complexity. Over residues Ser-434–Gly-448 the composition is skewed to polar residues. Composition is skewed to gly residues over residues Ala-461 to Val-476 and Gln-483 to Arg-496.

It belongs to the protein kinase superfamily. CMGC Ser/Thr protein kinase family. CDC2/CDKX subfamily. Interacts with CYCT1-3. As to expression, highly expressed in flowers. Expressed in seedlings, roots, rosettes and stems.

The catalysed reaction is L-seryl-[protein] + ATP = O-phospho-L-seryl-[protein] + ADP + H(+). It catalyses the reaction L-threonyl-[protein] + ATP = O-phospho-L-threonyl-[protein] + ADP + H(+). It carries out the reaction [DNA-directed RNA polymerase] + ATP = phospho-[DNA-directed RNA polymerase] + ADP + H(+). The chain is Cyclin-dependent kinase C-2 (CDKC-2) from Arabidopsis thaliana (Mouse-ear cress).